The sequence spans 298 residues: Probable endonuclease 4 (298 aa).

Zn(2+) is bound by residues His69, His111, Glu146, Asp180, His183, His215, Asp228, His230, and Glu260.

Belongs to the AP endonuclease 2 family. It depends on Zn(2+) as a cofactor.

The catalysed reaction is Endonucleolytic cleavage to 5'-phosphooligonucleotide end-products.. Its function is as follows. Endonuclease IV plays a role in DNA repair. It cleaves phosphodiester bonds at apurinic or apyrimidinic (AP) sites, generating a 3'-hydroxyl group and a 5'-terminal sugar phosphate. The protein is Probable endonuclease 4 of Bacillus cereus (strain 03BB102).